A 443-amino-acid polypeptide reads, in one-letter code: NADH-ubiquinone oxidoreductase chain 4 (443 aa).

15 helical membrane passes run 1 to 21 (MFIS…PEAH), 27 to 47 (VWSF…WWNF), 71 to 91 (GVAL…MMLL), 93 to 113 (TVAG…ALCV), 114 to 134 (LDLL…FLLI), 148 to 168 (IVLY…MIYS), 187 to 207 (VLGW…PVHL), 217 to 237 (PTAG…IGFL), 247 to 267 (FCVS…LFST), 279 to 299 (IVAY…FSQS), 308 to 328 (FLMI…GILY), 335 to 355 (FILY…LFFL), 362 to 382 (AFPL…IFAV), 385 to 405 (LLAY…FWAF), and 423 to 443 (EFHT…KPMA).

This sequence belongs to the complex I subunit 4 family.

The protein localises to the mitochondrion membrane. It carries out the reaction a ubiquinone + NADH + 5 H(+)(in) = a ubiquinol + NAD(+) + 4 H(+)(out). Functionally, core subunit of the mitochondrial membrane respiratory chain NADH dehydrogenase (Complex I) that is believed to belong to the minimal assembly required for catalysis. Complex I functions in the transfer of electrons from NADH to the respiratory chain. The immediate electron acceptor for the enzyme is believed to be ubiquinone. The sequence is that of NADH-ubiquinone oxidoreductase chain 4 (ND4) from Chlamydomonas reinhardtii (Chlamydomonas smithii).